We begin with the raw amino-acid sequence, 320 residues long: Protein EI24 homolog (320 aa).

Transmembrane regions (helical) follow at residues 41–61 (QCFL…KWFI), 94–114 (GLLQ…SFIL), and 175–195 (ILLL…PYIG). N-linked (GlcNAc...) asparagine glycosylation is present at asparagine 217. A run of 3 helical transmembrane segments spans residues 227 to 247 (LDFF…CVLA), 248 to 268 (IFFL…PLFV), and 292 to 312 (LGKL…LSIF).

Belongs to the EI24 (TC 9.B.7) family.

The protein resides in the membrane. In Arabidopsis thaliana (Mouse-ear cress), this protein is Protein EI24 homolog.